We begin with the raw amino-acid sequence, 164 residues long: Cyclic pyranopterin monophosphate synthase (164 aa).

Substrate is bound by residues 75-77 (MCH) and 116-117 (ME). Asp131 is an active-site residue.

This sequence belongs to the MoaC family. In terms of assembly, homohexamer; trimer of dimers.

It carries out the reaction (8S)-3',8-cyclo-7,8-dihydroguanosine 5'-triphosphate = cyclic pyranopterin phosphate + diphosphate. It functions in the pathway cofactor biosynthesis; molybdopterin biosynthesis. Catalyzes the conversion of (8S)-3',8-cyclo-7,8-dihydroguanosine 5'-triphosphate to cyclic pyranopterin monophosphate (cPMP). In Staphylococcus aureus (strain MSSA476), this protein is Cyclic pyranopterin monophosphate synthase.